The chain runs to 542 residues: Protein phosphatase 1G (542 aa).

Gly2 is lipidated: N-myristoyl glycine. Arg22 carries the post-translational modification Omega-N-methylarginine. One can recognise a PPM-type phosphatase domain in the interval 26-502 (PYGFSAMQGW…DNMTCIIICF (477 aa)). Asp60 and Gly61 together coordinate Mn(2+). 2 disordered regions span residues 117–136 (IAGR…DEDD) and 164–325 (CQKV…SDSG). The residue at position 122 (Thr122) is a Phosphothreonine. Acidic residues-rich tracts occupy residues 123–136 (EDED…DEDD) and 259–309 (DSED…DEEM). Residue Lys380 is modified to N6-acetyllysine. Mn(2+) contacts are provided by Asp438 and Asp493. Residues 513–542 (ESGKRKLEEALSTEGAEDTGNSDKKKAKRD) form a disordered region. Position 524 is a phosphoserine (Ser524).

This sequence belongs to the PP2C family. In terms of assembly, interacts with NOL3; may dephosphorylate NOL3. Mg(2+) serves as cofactor. The cofactor is Mn(2+). Highly expressed in testis. Low level of expression in kidney. Also expressed in a number of tissues undergoing proliferation including embryo, uterus at pregnancy, placenta, and ovaries.

The protein localises to the nucleus. The protein resides in the membrane. The catalysed reaction is O-phospho-L-seryl-[protein] + H2O = L-seryl-[protein] + phosphate. It catalyses the reaction O-phospho-L-threonyl-[protein] + H2O = L-threonyl-[protein] + phosphate. May be involved in regulation of cell cycle. The protein is Protein phosphatase 1G (Ppm1g) of Mus musculus (Mouse).